We begin with the raw amino-acid sequence, 98 residues long: Large ribosomal subunit protein uL23 (98 aa).

Belongs to the universal ribosomal protein uL23 family. As to quaternary structure, part of the 50S ribosomal subunit. Contacts protein L29, and trigger factor when it is bound to the ribosome.

Functionally, one of the early assembly proteins it binds 23S rRNA. One of the proteins that surrounds the polypeptide exit tunnel on the outside of the ribosome. Forms the main docking site for trigger factor binding to the ribosome. The chain is Large ribosomal subunit protein uL23 from Bifidobacterium animalis subsp. lactis (strain AD011).